A 545-amino-acid polypeptide reads, in one-letter code: Acetamidase (545 aa).

Catalysis depends on charge relay system residues lysine 130 and serine 205. Serine 229 acts as the Acyl-ester intermediate in catalysis.

The protein belongs to the amidase family.

It carries out the reaction a monocarboxylic acid amide + H2O = a monocarboxylate + NH4(+). The catalysed reaction is acetamide + H2O = acetate + NH4(+). In terms of biological role, allows acetamide to be used as a sole carbon or nitrogen source. This is Acetamidase (amdS) from Aspergillus oryzae (strain ATCC 42149 / RIB 40) (Yellow koji mold).